The primary structure comprises 98 residues: NADH-ubiquinone oxidoreductase chain 4L (98 aa).

Helical transmembrane passes span 1 to 21 (MIPTYMNIMLAFTISLLGMLT), 27 to 47 (VASLLCLEGMTMSLFIMTALI), and 61 to 81 (IILLVFAACEAAVGLALLISI).

The protein belongs to the complex I subunit 4L family. Core subunit of respiratory chain NADH dehydrogenase (Complex I) which is composed of 45 different subunits.

It is found in the mitochondrion inner membrane. The enzyme catalyses a ubiquinone + NADH + 5 H(+)(in) = a ubiquinol + NAD(+) + 4 H(+)(out). Functionally, core subunit of the mitochondrial membrane respiratory chain NADH dehydrogenase (Complex I) which catalyzes electron transfer from NADH through the respiratory chain, using ubiquinone as an electron acceptor. Part of the enzyme membrane arm which is embedded in the lipid bilayer and involved in proton translocation. The sequence is that of NADH-ubiquinone oxidoreductase chain 4L (MT-ND4L) from Macaca sylvanus (Barbary macaque).